The chain runs to 173 residues: MNLDQLEVSHDADSLCVVIEISKHSNIKYELDKESGALMVDRVLYGAQNYPANYGFVPNTLGSDGDPVDALVLSDVAFQAGSVVKARLVGVLNMEDESGMDEKLLALPIDKIDPTHSYVKDIDDLSKHTLDKIKHFFETYKDLEPNKWVKVKGFENKESAIKVLEKAIKAYQG.

Substrate contacts are provided by K28, R42, and Y54. Positions 64, 69, and 101 each coordinate Mg(2+). Residue Y140 coordinates substrate.

Belongs to the PPase family. Homohexamer. Mg(2+) serves as cofactor.

It is found in the cytoplasm. The catalysed reaction is diphosphate + H2O = 2 phosphate + H(+). Functionally, catalyzes the hydrolysis of inorganic pyrophosphate (PPi) forming two phosphate ions. In Helicobacter pylori (strain J99 / ATCC 700824) (Campylobacter pylori J99), this protein is Inorganic pyrophosphatase.